We begin with the raw amino-acid sequence, 388 residues long: 4-hydroxycoumarin synthase 2 (388 aa).

Residue cysteine 159 is part of the active site.

It belongs to the thiolase-like superfamily. Chalcone/stilbene synthases family. As to quaternary structure, homodimer.

The catalysed reaction is 2-hydroxybenzoyl-CoA + malonyl-CoA = 4-hydroxycoumarin + CO2 + 2 CoA. Its function is as follows. Type III polyketide synthase involved preferentially in the biosynthesis of 4-hydroxycoumarin from salicoyl-CoA. Can also use benzoyl-CoA and malonyl-CoA to produce 3,5-dihydroxybiphenyl as a major product and benzoyldiacetic acid lactone as a minor side product. Can also use m-hydroxybenzoyl-CoA as substrate, producing m-hydroxybenzoyl diacetic acid lactone as a derailment product. No activity with p-hydroxybenzoyl-CoA, CoA-linked cinnamic acids or acetyl-CoA. The sequence is that of 4-hydroxycoumarin synthase 2 (BIS3) from Sorbus aucuparia (European mountain ash).